We begin with the raw amino-acid sequence, 175 residues long: NADH dehydrogenase [ubiquinone] iron-sulfur protein 4, mitochondrial (175 aa).

The N-terminal 42 residues, 1–42 (MAAVSMSVVLRQTLWRRRAVAVAALSVSRVPTRSLRTSTWRL), are a transit peptide targeting the mitochondrion. Positions 151-175 (KVPKPKSKSYGANFSWNKRTRVSTK) are disordered. Serine 173 carries the post-translational modification Phosphoserine; by PKA.

It belongs to the complex I NDUFS4 subunit family. Mammalian complex I is composed of 45 different subunits. This is a component of the iron-sulfur (IP) fragment of the enzyme. Interacts with BCAP31 and TOMM40; the interaction mediates its translocation to the mitochondria; the interaction with BCAP31 is direct.

It localises to the mitochondrion inner membrane. Its function is as follows. Accessory subunit of the mitochondrial membrane respiratory chain NADH dehydrogenase (Complex I), that is believed not to be involved in catalysis. Complex I functions in the transfer of electrons from NADH to the respiratory chain. The immediate electron acceptor for the enzyme is believed to be ubiquinone. The polypeptide is NADH dehydrogenase [ubiquinone] iron-sulfur protein 4, mitochondrial (NDUFS4) (Homo sapiens (Human)).